A 33-amino-acid polypeptide reads, in one-letter code: Gastrin (33 aa).

A pyrrolidone carboxylic acid mark is found at Gln1 and Gln18. Residue Tyr28 is modified to Sulfotyrosine. Phe33 is modified (phenylalanine amide).

It belongs to the gastrin/cholecystokinin family.

The protein resides in the secreted. In terms of biological role, gastrin stimulates the stomach mucosa to produce and secrete hydrochloric acid and the pancreas to secrete its digestive enzymes. It also stimulates smooth muscle contraction and increases blood circulation and water secretion in the stomach and intestine. This is Gastrin (GAST) from Didelphis virginiana (North American opossum).